A 418-amino-acid chain; its full sequence is Gamma-glutamyl phosphate reductase (418 aa).

Belongs to the gamma-glutamyl phosphate reductase family.

Its subcellular location is the cytoplasm. It carries out the reaction L-glutamate 5-semialdehyde + phosphate + NADP(+) = L-glutamyl 5-phosphate + NADPH + H(+). It participates in amino-acid biosynthesis; L-proline biosynthesis; L-glutamate 5-semialdehyde from L-glutamate: step 2/2. Catalyzes the NADPH-dependent reduction of L-glutamate 5-phosphate into L-glutamate 5-semialdehyde and phosphate. The product spontaneously undergoes cyclization to form 1-pyrroline-5-carboxylate. The chain is Gamma-glutamyl phosphate reductase from Histophilus somni (strain 2336) (Haemophilus somnus).